The primary structure comprises 316 residues: Olfactory receptor 1165 (316 aa).

The Extracellular portion of the chain corresponds to 1–28 (MMLDLGNESSVTMFILSGFSEYPHLHAP). Asn7 carries N-linked (GlcNAc...) asparagine glycosylation. Residues 29-50 (LFLLFFMIYTVTLIGNLGIIVV) form a helical membrane-spanning segment. The Cytoplasmic portion of the chain corresponds to 51–61 (RKVNPKLHTPM). Residues 62–80 (YFFLSHLSFLDICYSSVFT) traverse the membrane as a helical segment. Topologically, residues 81-99 (PKLLEILIVEDRTISFKGC) are extracellular. Cys99 and Cys181 are disulfide-bonded. A helical transmembrane segment spans residues 100–122 (MTQFFLICAFVITEMFMLAVMAY). The Cytoplasmic portion of the chain corresponds to 123–141 (DRFVAVCNPLLYTVSMSPK). The chain crosses the membrane as a helical span at residues 142–166 (LCAFLVAGTYMWGVLCSLTITYSLL). Residues 167 to 205 (QLSYCGPNIINHFGCEYSAILSLSCSDPTFSQVVCLTIS) lie on the Extracellular side of the membrane. Residues 206 to 228 (IFNETCSLLIILASYVFIVVTII) form a helical membrane-spanning segment. At 229 to 239 (KMPSKGGLQKA) the chain is on the cytoplasmic side. The helical transmembrane segment at 240-263 (FSTCSSHLTAISIFHGIILLLYCV) threads the bilayer. Topologically, residues 264–268 (PNSKN) are extracellular. A helical transmembrane segment spans residues 269 to 291 (SWLVVKVATVLFTVMIPMLNPLI). Residues 292-316 (YSLRNKDVKGTVSRLMHLKLQAHST) lie on the Cytoplasmic side of the membrane.

It belongs to the G-protein coupled receptor 1 family.

It localises to the cell membrane. In terms of biological role, olfactory receptor. The polypeptide is Olfactory receptor 1165 (Mus musculus (Mouse)).